We begin with the raw amino-acid sequence, 513 residues long: Na(+)/H(+) antiporter NhaB (513 aa).

The next 12 helical transmembrane spans lie at 23–43 (LALIIFLIVNPLIFLISPFVA), 52–72 (IFTLAMALKCYPLLPGGLLAI), 97–117 (LLLMFMVAGIYFMKQLLLFIF), 120–140 (LLLSIRSKMLLSLSFCVAAAF), 144–164 (FLDALTVVAVVISVAVGFYGI), 202–222 (LMMHAGVGTALGGVMTMVGEP), 238–258 (FFLRMSPVTVPVLICGLLTCL), 303–323 (AIIGVWLVTALALHLAEVGLI), 348–368 (TESLPFTALLTVFFSVVAVII), 391–411 (LFYIFNGLLSSISDNVFVGTI), 447–467 (ATPNGQAAFLFLLTSALAPLI), and 475–495 (VWMALPYTLVLTLVGLLCVEF).

It belongs to the NhaB Na(+)/H(+) (TC 2.A.34) antiporter family.

It localises to the cell inner membrane. It carries out the reaction 2 Na(+)(in) + 3 H(+)(out) = 2 Na(+)(out) + 3 H(+)(in). In terms of biological role, na(+)/H(+) antiporter that extrudes sodium in exchange for external protons. The sequence is that of Na(+)/H(+) antiporter NhaB from Shigella sonnei (strain Ss046).